Consider the following 1002-residue polypeptide: Solute carrier family 12 member 3 (1002 aa).

The Cytoplasmic portion of the chain corresponds to M1–G135. S41 carries the post-translational modification Phosphoserine. T44 carries the phosphothreonine modification. S47 is modified (phosphoserine). A phosphothreonine mark is found at T48, T53, and T58. Residues S71 and S89 each carry the phosphoserine modification. Phosphothreonine is present on T122. The residue at position 124 (S124) is a Phosphoserine. A discontinuously helical transmembrane segment spans residues W136–G165. Residues L146 and W149 each coordinate Na(+). The chain crosses the membrane as a helical span at residues I166 to I187. At S188–G218 the chain is on the cytoplasmic side. A helical membrane pass occupies residues L219–R241. At D242–D253 the chain is on the extracellular side. 2 helical membrane-spanning segments follow: residues P254–E278 and W279–G301. At T302 to G336 the chain is on the extracellular side. Residues S337–I358 traverse the membrane as a discontinuously helical segment. Chloride-binding residues include G351, I352, and L353. Over S359 to I369 the chain is Cytoplasmic. A helical transmembrane segment spans residues P370–I391. Residues G392 to F451 are Extracellular-facing. N404 is a glycosylation site (N-linked (GlcNAc...) asparagine). A disulfide bridge links C414 with C419. Residue N424 is glycosylated (N-linked (GlcNAc...) asparagine). Residues C428 and C434 are joined by a disulfide bond. Residues A452–A475 form a helical membrane-spanning segment. Na(+) contacts are provided by A462, S465, and S466. Residues K476–R505 lie on the Cytoplasmic side of the membrane. The helical transmembrane segment at G506–I520 threads the bilayer. The Extracellular portion of the chain corresponds to A521–T525. Residues I526–N542 form a helical membrane-spanning segment. Residue Y538 coordinates chloride. Residues F543–K565 are Cytoplasmic-facing. The next 2 membrane-spanning stretches (helical) occupy residues W566–W585 and A586–L597. Residues L598–Q1002 lie on the Cytoplasmic side of the membrane. Residues S613–G628 are scissor helix. ATP-binding residues include L646, R653, V675, G739, L778, and N779.

The protein belongs to the SLC12A transporter family. In terms of assembly, homodimer; adopts a domain-swap conformation at the scissor helices connecting the transmembrane domain and C-terminal domain. Interacts with KLHL3. Interacts with IL18R1; this interaction is increased by IL18 treatment. Ubiquitinated; ubiquitination is essential for regulation of endocytosis. In terms of processing, phosphorylated at Thr-53, Thr-58 and Ser-71 by OXSR1/OSR1 and STK39/SPAK downstream of WNK4, promoting its activity. Phosphorylated in response to IL18. Expressed predominantly in kidney, including in distal tubules (at protein level). Detected at low levels in heart, lung and liver. Not detected in normal aorta, but abundantly expressed in fatty streaks and advanced atherosclerotic lesions. In atherosclerotic lesions, expressed in macrophages, smooth muscle cells and endothelial cells (at protein level).

The protein localises to the cell membrane. The protein resides in the apical cell membrane. The enzyme catalyses chloride(out) + Na(+)(out) = chloride(in) + Na(+)(in). Its activity is regulated as follows. Phosphorylation by OXSR1/OSR1 and STK39/SPAK in kidney distal convoluted tubules promotes its activity. Also activated by OXSR1/OSR1 and STK39/SPAK downstream of WNK3. Inhibited by thiazide-type diuretic metolazone. Thiazide drugs, such as polythiazide, specifically inhibit SLC12A3/NCC transporter activity by competing with chloride for binding. Its function is as follows. Electroneutral sodium and chloride ion cotransporter, which acts as a key mediator of sodium and chloride reabsorption in kidney distal convoluted tubules. Also acts as a receptor for the pro-inflammatory cytokine IL18, thereby contributing to IL18-induced cytokine production, including IFNG, IL6, IL18 and CCL2. May act either independently of IL18R1, or in a complex with IL18R1. The chain is Solute carrier family 12 member 3 from Mus musculus (Mouse).